Consider the following 854-residue polypeptide: Protein SEY1 homolog (854 aa).

The Cytoplasmic portion of the chain corresponds to 1–724 (MAAFSGETAV…LRNIESGKQS (724 aa)). Positions 49 to 291 (GVNYHVVGVF…NSNFLFSNCS (243 aa)) constitute a GB1/RHD3-type G domain. 59–66 (GGQSSGKS) contacts GTP. A coiled-coil region spans residues 336–386 (KHAAIEEFKEVCEEYTKKIQRGDVIPQFTRALEETIERLLKNFSDQTKLYK). The helical transmembrane segment at 725–745 (LPPWVLPVMLLLGWNELYYLL) threads the bilayer. The Lumenal portion of the chain corresponds to 746–748 (TSP). A helical transmembrane segment spans residues 749 to 769 (ILLIAIIVIAVLFFKTFLKSQ). Residues 770-854 (LEVLEEKCPV…CRESRDKGED (85 aa)) lie on the Cytoplasmic side of the membrane. The disordered stretch occupies residues 808 to 854 (GGGGAQFRDPTQATSVSGASAGVSSESSSAASPRRRVCRESRDKGED). Low complexity predominate over residues 822 to 839 (SVSGASAGVSSESSSAAS). The segment covering 845 to 854 (CRESRDKGED) has biased composition (basic and acidic residues).

It belongs to the TRAFAC class dynamin-like GTPase superfamily. GB1/RHD3 GTPase family. RHD3 subfamily.

It localises to the endoplasmic reticulum membrane. In terms of biological role, probable GTP-binding protein that may be involved in cell development. The chain is Protein SEY1 homolog from Trypanosoma brucei brucei (strain 927/4 GUTat10.1).